The sequence spans 459 residues: Sensor histidine kinase SpaK (459 aa).

Residues 1 to 18 are Cytoplasmic-facing; that stretch reads MGIGFKGRKTLLRELVKY. The chain crosses the membrane as a helical span at residues 19–39; the sequence is MVTLCISLVVLALLYIFINTI. Residues 40–155 lie on the Extracellular side of the membrane; it reads AMNTGFSHPA…RKYLPNYELT (116 aa). A helical membrane pass occupies residues 156–176; sequence SICILIILLIIVISIITTYFA. The Cytoplasmic portion of the chain corresponds to 177–459; it reads NRLRKHFETL…VRVKIPLRNE (283 aa). The region spanning 244–458 is the Histidine kinase domain; the sequence is ALAHEIKIPI…EVRVKIPLRN (215 aa). His247 carries the post-translational modification Phosphohistidine; by autocatalysis.

It is found in the cell membrane. It catalyses the reaction ATP + protein L-histidine = ADP + protein N-phospho-L-histidine.. Its function is as follows. Member of the two-component regulatory system SpaK/SpaR involved in the regulation of the biosynthesis of lantibiotic subtilin. SpaK may function as a membrane-associated protein kinase that phosphorylates SpaR in response to environmental signals. This is Sensor histidine kinase SpaK (spaK) from Bacillus subtilis.